We begin with the raw amino-acid sequence, 338 residues long: Tetraacyldisaccharide 4'-kinase (338 aa).

Residue 53–60 (TVGGSGKT) participates in ATP binding.

It belongs to the LpxK family.

It catalyses the reaction a lipid A disaccharide + ATP = a lipid IVA + ADP + H(+). It functions in the pathway glycolipid biosynthesis; lipid IV(A) biosynthesis; lipid IV(A) from (3R)-3-hydroxytetradecanoyl-[acyl-carrier-protein] and UDP-N-acetyl-alpha-D-glucosamine: step 6/6. Transfers the gamma-phosphate of ATP to the 4'-position of a tetraacyldisaccharide 1-phosphate intermediate (termed DS-1-P) to form tetraacyldisaccharide 1,4'-bis-phosphate (lipid IVA). This is Tetraacyldisaccharide 4'-kinase from Azorhizobium caulinodans (strain ATCC 43989 / DSM 5975 / JCM 20966 / LMG 6465 / NBRC 14845 / NCIMB 13405 / ORS 571).